Here is a 463-residue protein sequence, read N- to C-terminus: Tryprostatin B synthase (463 aa).

2 residues coordinate brevianamide F: Met-93 and Glu-101. Residues Arg-112, Lys-200, and Tyr-202 each contribute to the dimethylallyl diphosphate site. Tyr-204 is a brevianamide F binding site. Residues Lys-293, Tyr-295, Gln-379, Tyr-381, Tyr-445, and Tyr-449 each contribute to the dimethylallyl diphosphate site.

This sequence belongs to the tryptophan dimethylallyltransferase family.

The catalysed reaction is brevianamide F + dimethylallyl diphosphate = tryprostatin B + diphosphate. The protein operates within mycotoxin biosynthesis. Functionally, brevianamide F prenyltransferase; part of the gene cluster that mediates the biosynthesis of fumitremorgins, indole alkaloids that carry not only intriguing chemical structures, but also interesting biological and pharmacological activities. The biosynthesis of fumitremorgin-type alkaloids begins by condensation of the two amino acids L-tryptophan and L-proline to brevianamide F, catalyzed by the non-ribosomal peptide synthetase ftmPS/ftmA. Brevianamide F is then prenylated by the prenyltransferase ftmPT1/ftmB in the presence of dimethylallyl diphosphate, resulting in the formation of tryprostatin B. The three cytochrome P450 monooxygenases, ftmP450-1/ftmC, ftmP450-2/ftmE and ftmP450-3/FtmG, are responsible for the conversion of tryprostatin B to 6-hydroxytryprostatin B, tryprostatin A to fumitremorgin C and fumitremorgin C to 12,13-dihydroxyfumitremorgin C, respectively. The putative methyltransferase ftmMT/ftmD is expected for the conversion of 6-hydroxytryprostatin B to tryprostatin A. FtmPT2/FtmH catalyzes the prenylation of 12,13-dihydroxyfumitre-morgin C in the presence of dimethylallyl diphosphate, resulting in the formation of fumitremorgin B. Fumitremorgin B is further converted to verruculogen by ftmOx1/ftmF via the insertion of an endoperoxide bond between the two prenyl moieties. Finally, verruculogen is further converted to fumitremorgin A by the verruculogen prenyltransferase ftmPT3. The chain is Tryprostatin B synthase from Neosartorya fischeri (strain ATCC 1020 / DSM 3700 / CBS 544.65 / FGSC A1164 / JCM 1740 / NRRL 181 / WB 181) (Aspergillus fischerianus).